The primary structure comprises 238 residues: ATP synthase subunit a (238 aa).

The next 6 membrane-spanning stretches (helical) occupy residues 18-38 (TTNL…VFAL), 76-96 (FGLY…IGLF), 114-134 (PIVT…SGVA), 150-170 (FKVW…TLGL), 188-208 (GIAF…ALIW), and 211-231 (FSVF…SVYI).

This sequence belongs to the ATPase A chain family. In terms of assembly, F-type ATPases have 2 components, CF(1) - the catalytic core - and CF(0) - the membrane proton channel. CF(1) has five subunits: alpha(3), beta(3), gamma(1), delta(1), epsilon(1). CF(0) has three main subunits: a(1), b(2) and c(9-12). The alpha and beta chains form an alternating ring which encloses part of the gamma chain. CF(1) is attached to CF(0) by a central stalk formed by the gamma and epsilon chains, while a peripheral stalk is formed by the delta and b chains.

The protein localises to the cell membrane. Key component of the proton channel; it plays a direct role in the translocation of protons across the membrane. This chain is ATP synthase subunit a, found in Pediococcus pentosaceus (strain ATCC 25745 / CCUG 21536 / LMG 10740 / 183-1w).